The sequence spans 300 residues: Tyrosine recombinase XerC (300 aa).

The 87-residue stretch at 2-88 (TQEGQLEKRF…SLRSFYTFLL (87 aa)) folds into the Core-binding (CB) domain. Residues 109 to 294 (RLPKFFYSEE…TKEHLKSTYM (186 aa)) enclose the Tyr recombinase domain. Active-site residues include Arg150, Lys174, His246, Arg249, and His272. The O-(3'-phospho-DNA)-tyrosine intermediate role is filled by Tyr281.

Belongs to the 'phage' integrase family. XerC subfamily. In terms of assembly, forms a cyclic heterotetrameric complex composed of two molecules of XerC and two molecules of XerD.

It localises to the cytoplasm. Site-specific tyrosine recombinase, which acts by catalyzing the cutting and rejoining of the recombining DNA molecules. The XerC-XerD complex is essential to convert dimers of the bacterial chromosome into monomers to permit their segregation at cell division. It also contributes to the segregational stability of plasmids. The chain is Tyrosine recombinase XerC from Listeria innocua serovar 6a (strain ATCC BAA-680 / CLIP 11262).